Consider the following 963-residue polypeptide: Iron-responsive element-binding protein 2 (963 aa).

Residues Cys512, Cys578, and Cys581 each contribute to the [4Fe-4S] cluster site.

Belongs to the aconitase/IPM isomerase family. Interacts with RBCK1 only in iron-rich conditions. Interacts (when associated with the 4Fe-4S) with FBXL5. Interacts with CIAO1 and CIAO2A. [4Fe-4S] cluster is required as a cofactor. Ubiquitinated and degraded by the proteasome in presence of high level of iron and oxygen. Ubiquitinated by a SCF complex containing FBXL5. Upon iron and oxygen depletion FBXL5 is degraded, preventing ubiquitination and allowing its RNA-binding activity.

It is found in the cytoplasm. Its function is as follows. RNA-binding protein that binds to iron-responsive elements (IRES), which are stem-loop structures found in the 5'-UTR of ferritin, and delta aminolevulinic acid synthase mRNAs, and in the 3'-UTR of transferrin receptor mRNA. Binding to the IRE element in ferritin results in the repression of its mRNA translation. Binding of the protein to the transferrin receptor mRNA inhibits the degradation of this otherwise rapidly degraded mRNA. The protein is Iron-responsive element-binding protein 2 (Ireb2) of Mus musculus (Mouse).